The chain runs to 204 residues: Holliday junction branch migration complex subunit RuvA (204 aa).

Positions 1-64 (MIGRLRGIIL…EDAQLLFGFN (64 aa)) are domain I. The segment at 65-143 (SKPERALFRE…GMHGDLFASD (79 aa)) is domain II. The tract at residues 144 to 155 (APFALTSEMPKE) is flexible linker. The segment at 156–204 (TANDAEGEAVAALTALGYKPQEASRMIVKVGKPDADCETLIREALRAAI) is domain III.

It belongs to the RuvA family. As to quaternary structure, homotetramer. Forms an RuvA(8)-RuvB(12)-Holliday junction (HJ) complex. HJ DNA is sandwiched between 2 RuvA tetramers; dsDNA enters through RuvA and exits via RuvB. An RuvB hexamer assembles on each DNA strand where it exits the tetramer. Each RuvB hexamer is contacted by two RuvA subunits (via domain III) on 2 adjacent RuvB subunits; this complex drives branch migration. In the full resolvosome a probable DNA-RuvA(4)-RuvB(12)-RuvC(2) complex forms which resolves the HJ.

The protein localises to the cytoplasm. The RuvA-RuvB-RuvC complex processes Holliday junction (HJ) DNA during genetic recombination and DNA repair, while the RuvA-RuvB complex plays an important role in the rescue of blocked DNA replication forks via replication fork reversal (RFR). RuvA specifically binds to HJ cruciform DNA, conferring on it an open structure. The RuvB hexamer acts as an ATP-dependent pump, pulling dsDNA into and through the RuvAB complex. HJ branch migration allows RuvC to scan DNA until it finds its consensus sequence, where it cleaves and resolves the cruciform DNA. The chain is Holliday junction branch migration complex subunit RuvA from Erwinia tasmaniensis (strain DSM 17950 / CFBP 7177 / CIP 109463 / NCPPB 4357 / Et1/99).